A 246-amino-acid polypeptide reads, in one-letter code: 3'(2'),5'-bisphosphate nucleotidase CysQ (246 aa).

5 residues coordinate Mg(2+): Glu-64, Asp-83, Leu-85, Asp-86, and Asp-205. Glu-64 contacts substrate. Substrate contacts are provided by residues 85–88 (LDGT) and Asp-205.

This sequence belongs to the inositol monophosphatase superfamily. CysQ family. Requires Mg(2+) as cofactor.

The protein localises to the cell inner membrane. The catalysed reaction is adenosine 3',5'-bisphosphate + H2O = AMP + phosphate. Functionally, converts adenosine-3',5'-bisphosphate (PAP) to AMP. The sequence is that of 3'(2'),5'-bisphosphate nucleotidase CysQ from Salmonella typhimurium (strain LT2 / SGSC1412 / ATCC 700720).